Reading from the N-terminus, the 295-residue chain is Virginiamycin B lyase (295 aa).

Residue H228 participates in substrate binding. E268 contributes to the Mg(2+) binding site. The active-site Proton acceptor is the H270. Residue E285 coordinates Mg(2+).

The protein belongs to the Vgb family. In terms of assembly, monomer. Mg(2+) is required as a cofactor.

Inactivates the type B streptogramin antibiotics by linearizing the lactone ring at the ester linkage, generating a free phenylglycine carboxylate and converting the threonyl moiety into 2-amino-butenoic acid. The protein is Virginiamycin B lyase of Clostridium beijerinckii (strain ATCC 51743 / NCIMB 8052) (Clostridium acetobutylicum).